Reading from the N-terminus, the 360-residue chain is Phospho-N-acetylmuramoyl-pentapeptide-transferase (360 aa).

10 consecutive transmembrane segments (helical) span residues 18-38 (VFSY…FLSL), 72-92 (PTMG…MWAY), 94-114 (SNPY…VGFV), 132-152 (WKYF…YAVG), 168-188 (IMPQ…VGTS), 199-219 (GLAI…AWAT), 236-256 (AGEL…FLWF), 263-283 (VFMG…IAVL), 288-308 (FLLL…ILQV), and 338-358 (VIVR…ATLK).

Belongs to the glycosyltransferase 4 family. MraY subfamily. It depends on Mg(2+) as a cofactor.

It is found in the cell inner membrane. The enzyme catalyses UDP-N-acetyl-alpha-D-muramoyl-L-alanyl-gamma-D-glutamyl-meso-2,6-diaminopimeloyl-D-alanyl-D-alanine + di-trans,octa-cis-undecaprenyl phosphate = di-trans,octa-cis-undecaprenyl diphospho-N-acetyl-alpha-D-muramoyl-L-alanyl-D-glutamyl-meso-2,6-diaminopimeloyl-D-alanyl-D-alanine + UMP. It functions in the pathway cell wall biogenesis; peptidoglycan biosynthesis. Catalyzes the initial step of the lipid cycle reactions in the biosynthesis of the cell wall peptidoglycan: transfers peptidoglycan precursor phospho-MurNAc-pentapeptide from UDP-MurNAc-pentapeptide onto the lipid carrier undecaprenyl phosphate, yielding undecaprenyl-pyrophosphoryl-MurNAc-pentapeptide, known as lipid I. This Serratia proteamaculans (strain 568) protein is Phospho-N-acetylmuramoyl-pentapeptide-transferase.